The following is a 603-amino-acid chain: Protein SHORT-ROOT 2 (603 aa).

Disordered stretches follow at residues 11 to 58 (HHHH…HSHS) and 106 to 140 (DFSS…SSAG). Positions 31–44 (SYPSSRGSTSSPSS) are enriched in low complexity. Over residues 45–58 (HHTHNHTYYHHSHS) the composition is skewed to basic residues. The span at 108 to 125 (SSSSSSRQFHSGTGAPSS) shows a compositional bias: low complexity. Residues 179-602 (AAPSSSGRWA…QPVVWASAWK (424 aa)) form the GRAS domain. Residues 186–249 (RWAAQLLMEC…LTTSGPRTLR (64 aa)) are leucine repeat I (LRI). The VHIID stretch occupies residues 268–354 (ALKFQELSPW…DTPHLSITTV (87 aa)). The VHIID signature appears at 318–322 (LHILD). Positions 370–406 (EIGQRLEKFARLMGVPFSFRAVHHAGDLADLDLAALD) are leucine repeat II (LRII). The segment at 416 to 514 (LAVNCVNALR…ERAVGRAIVD (99 aa)) is PFYRE. Positions 517-602 (SCPASQSAER…QPVVWASAWK (86 aa)) are SAW.

It belongs to the GRAS family. As to quaternary structure, does not interact with SCR1.

Its subcellular location is the nucleus. Functionally, putative transcription factor involved in asymmetric cell division. The protein is Protein SHORT-ROOT 2 (SHR2) of Oryza sativa subsp. indica (Rice).